We begin with the raw amino-acid sequence, 351 residues long: MFRAIPFTATVHPYAITAPRLVVKMSAIATKNTRVESLEVKPPAHPTYDLKEVMQLALSEDAGNLGDVTCKATIPLDMESDAHFLAKEDGIVAGIALAEMIFAEVDPSLKVEWYVNDGDKVHKGLKFGKVQGNAYNIVIAERVVLNFMQRMSGIATLTKEMADAAHPAYILETRKTAPGLRLVDKWAVLIGGGKNHRMGLFDMVMIKDNHISAAGGVGKALKSVDQYLEQNKLQIGVEVETRTIEEVREVLEYASQTKTSLTRIMLDNMVVPLSNGDIDVSMLKEAVELINGRFDTEASGNVTLETVHKIGQTGVTYISSGALTHSVKALDISLKIDTELALEVGRRTKRA.

Substrate contacts are provided by residues Arg142, Thr173–Lys175, Arg197, Lys207, Glu240, Asp267, Ser299–Asn301, and Ser320–Ala322.

Belongs to the NadC/ModD family.

It localises to the mitochondrion. The catalysed reaction is nicotinate beta-D-ribonucleotide + CO2 + diphosphate = quinolinate + 5-phospho-alpha-D-ribose 1-diphosphate + 2 H(+). Its pathway is alkaloid biosynthesis; nicotine biosynthesis. It participates in cofactor biosynthesis; NAD(+) biosynthesis; nicotinate D-ribonucleotide from quinolinate: step 1/1. Its function is as follows. Involved in the biosynthesis of pyridine alkaloid natural products, leading mainly to the production of anabasine, anatabine, nicotine and nornicotine, effective deterrents against herbivores with antiparasitic and pesticide properties (neurotoxins); nornicotine serves as the precursor in the synthesis of the carcinogen compound N'-nitrosonornicotine (NNN). Involved in the catabolism of quinolinic acid (QA). The sequence is that of Quinolinate phosphoribosyltransferase [decarboxylating] 2, mitochondrial from Nicotiana glauca (Glaucous tobacco).